A 517-amino-acid chain; its full sequence is Protein IQ-DOMAIN 13 (517 aa).

The calmodulin-binding stretch occupies residues 1-11; it reads MGKKGSWFSAI. 2 disordered regions span residues 1–60 and 81–147; these read MGKK…FLPI and VFRP…PRAV. A compositionally biased stretch (basic residues) spans 40–49; it reads KKKKGFGKKL. Residues 89 to 99 show a composition bias toward polar residues; the sequence is DRANSSSTSVA. A compositionally biased stretch (pro residues) spans 134–144; the sequence is PKPPSPKPPSP. IQ domains follow at residues 168–196 and 197–218; these read KNAY…GLVR and LQGV…KYMQ. 2 disordered regions span residues 324–407 and 425–452; these read QPFR…LTSC and KLRA…SSFP. The span at 328–342 shows a compositional bias: low complexity; sequence LTPTRPSLSPQPQSS. Over residues 343–367 the composition is skewed to polar residues; it reads NQNHFRLNNSFDTSTPNSSKSTFVT. Residues 432 to 448 are compositionally biased toward basic and acidic residues; that stretch reads PKERMDRTPVSTNEKRR.

This sequence belongs to the IQD family. In terms of assembly, binds to multiple calmodulin (CaM) in the presence of Ca(2+) and CaM-like proteins. In terms of tissue distribution, expressed in vessels of roots, cotyledons and leaves, as well as in trichomes.

Its subcellular location is the cell membrane. It localises to the cytoplasm. The protein localises to the cytoskeleton. In terms of biological role, may be involved in cooperative interactions with calmodulins or calmodulin-like proteins. Recruits calmodulin proteins to microtubules, thus being a potential scaffold in cellular signaling and trafficking. Regulates the formation of oval xylem secondary cell-wall deposition pits through microtubule-dependent lateral inhibition of Rho GTPase domains, thus confining the area of active ROP domains within the lattice of the cortical microtubules. May associate with nucleic acids and regulate gene expression at the transcriptional or post-transcriptional level. This is Protein IQ-DOMAIN 13 from Arabidopsis thaliana (Mouse-ear cress).